We begin with the raw amino-acid sequence, 95 residues long: Aspartyl/glutamyl-tRNA(Asn/Gln) amidotransferase subunit C (95 aa).

It belongs to the GatC family. As to quaternary structure, heterotrimer of A, B and C subunits.

The enzyme catalyses L-glutamyl-tRNA(Gln) + L-glutamine + ATP + H2O = L-glutaminyl-tRNA(Gln) + L-glutamate + ADP + phosphate + H(+). The catalysed reaction is L-aspartyl-tRNA(Asn) + L-glutamine + ATP + H2O = L-asparaginyl-tRNA(Asn) + L-glutamate + ADP + phosphate + 2 H(+). In terms of biological role, allows the formation of correctly charged Asn-tRNA(Asn) or Gln-tRNA(Gln) through the transamidation of misacylated Asp-tRNA(Asn) or Glu-tRNA(Gln) in organisms which lack either or both of asparaginyl-tRNA or glutaminyl-tRNA synthetases. The reaction takes place in the presence of glutamine and ATP through an activated phospho-Asp-tRNA(Asn) or phospho-Glu-tRNA(Gln). The protein is Aspartyl/glutamyl-tRNA(Asn/Gln) amidotransferase subunit C of Xanthobacter autotrophicus (strain ATCC BAA-1158 / Py2).